A 355-amino-acid polypeptide reads, in one-letter code: Uroporphyrinogen decarboxylase (355 aa).

Residues 27–31, D78, Y155, T210, and H328 each bind substrate; that span reads RQAGR.

Belongs to the uroporphyrinogen decarboxylase family. As to quaternary structure, homodimer.

The protein resides in the cytoplasm. It carries out the reaction uroporphyrinogen III + 4 H(+) = coproporphyrinogen III + 4 CO2. It functions in the pathway porphyrin-containing compound metabolism; protoporphyrin-IX biosynthesis; coproporphyrinogen-III from 5-aminolevulinate: step 4/4. In terms of biological role, catalyzes the decarboxylation of four acetate groups of uroporphyrinogen-III to yield coproporphyrinogen-III. In Pseudomonas fluorescens (strain Pf0-1), this protein is Uroporphyrinogen decarboxylase.